A 344-amino-acid polypeptide reads, in one-letter code: Phenylalanine--tRNA ligase alpha subunit (344 aa).

Glu269 provides a ligand contact to Mg(2+).

The protein belongs to the class-II aminoacyl-tRNA synthetase family. Phe-tRNA synthetase alpha subunit type 1 subfamily. Tetramer of two alpha and two beta subunits. Mg(2+) serves as cofactor.

The protein localises to the cytoplasm. It catalyses the reaction tRNA(Phe) + L-phenylalanine + ATP = L-phenylalanyl-tRNA(Phe) + AMP + diphosphate + H(+). The chain is Phenylalanine--tRNA ligase alpha subunit from Ralstonia pickettii (strain 12J).